Reading from the N-terminus, the 186-residue chain is UPF0301 protein CV_3909 (186 aa).

This sequence belongs to the UPF0301 (AlgH) family.

The chain is UPF0301 protein CV_3909 from Chromobacterium violaceum (strain ATCC 12472 / DSM 30191 / JCM 1249 / CCUG 213 / NBRC 12614 / NCIMB 9131 / NCTC 9757 / MK).